Reading from the N-terminus, the 598-residue chain is Nuclear receptor subfamily 4 group A member 1 (598 aa).

Disordered stretches follow at residues 1 to 50 (MPCI…PTAL) and 120 to 159 (LDET…GSFG). Composition is skewed to low complexity over residues 37–50 (LASP…PTAL) and 134–145 (SPCSAPSPSTPS). The tract at residues 171–466 (RAWTEQLPKA…PAEGKLIFCS (296 aa)) is required for nuclear import. The segment at residues 264-339 (EGRCAVCGDN…VGMVKEVVRT (76 aa)) is a DNA-binding region (nuclear receptor). NR C4-type zinc fingers lie at residues 267 to 287 (CAVC…CEGC) and 303 to 327 (CLAN…FQKC). The segment at 268-354 (AVCGDNASCQ…RRGRLPSKPK (87 aa)) is required for binding NBRE-containing DNA. Residues 299-361 (AKYICLANKD…KPKQPPDASP (63 aa)) form a required for the interaction with RXRA region. Ser341 carries the phosphoserine; by PKA modification. The disordered stretch occupies residues 341–361 (SLKGRRGRLPSKPKQPPDASP). Ser351 bears the Phosphoserine; by PKA, RPS6KA1 and RPS6KA3 mark. The NR LBD domain occupies 360–595 (SPANLLTSLV…PIVDKIFMDT (236 aa)). The interval 521-544 (PRRVEELQNRIASCLKEHVSAVAG) is binds lipopolysaccharide. The interval 584 to 595 (PPPIVDKIFMDT) is AF-2.

This sequence belongs to the nuclear hormone receptor family. NR4 subfamily. In terms of assembly, binds the NGFI-B response element (NBRE) as a monomer. Binds the Nur response element (NurRE), consisting of two inverse NBRE-related octanucleotide repeats separated by 6 base-pairs, as a dimer. Interacts (via N-terminus) with NLRP3 (via LRR repeat domain); the interaction is direct, requires binding of NR4A1/Nur77 to NBRE-containing dsDNA and lipopolysaccharide, and leads to non-canonical NLRP3 inflammasome activation. Interacts with GADD45GIP1. Interacts with STK11. Heterodimer (via DNA-binding domain) with RXRA (via C-terminus); DNA-binding of the heterodimer is enhanced by 9-cis retinoic acid. Competes for the RXRA interaction with EP300 and thereby attenuates EP300 mediated acetylation of RXRA. Interacts with NCOA1. Interacts with NCOA2. Interacts with NCOA3. Zn(2+) is required as a cofactor. Post-translationally, phosphorylated at Ser-351 by RPS6KA1 and RPS6KA3 in response to mitogenic or stress stimuli. In terms of processing, acetylated by p300/CBP, acetylation increases stability. Deacetylated by HDAC1.

Its subcellular location is the cytoplasm. The protein resides in the cytosol. The protein localises to the nucleus. It is found in the mitochondrion. In terms of biological role, orphan nuclear receptor. Binds the NGFI-B response element (NBRE) 5'-AAAGGTCA-3'. Binds 9-cis-retinoic acid outside of its ligand-binding (NR LBD) domain. Participates in energy homeostasis by sequestrating the kinase STK11 in the nucleus, thereby attenuating cytoplasmic AMPK activation. Regulates the inflammatory response in macrophages by regulating metabolic adaptations during inflammation, including repressing the transcription of genes involved in the citric acid cycle (TCA). Inhibits NF-kappa-B signaling by binding to low-affinity NF-kappa-B binding sites, such as at the IL2 promoter. May act concomitantly with NR4A2 in regulating the expression of delayed-early genes during liver regeneration. Plays a role in the vascular response to injury. In the cytosol, upon its detection of both bacterial lipopolysaccharide (LPS) and NBRE-containing mitochondrial DNA released by GSDMD pores during pyroptosis, it promotes non-canonical NLRP3 inflammasome activation by stimulating association of NLRP3 and NEK7. This chain is Nuclear receptor subfamily 4 group A member 1 (NR4A1), found in Canis lupus familiaris (Dog).